The following is a 475-amino-acid chain: Deoxyguanosinetriphosphate triphosphohydrolase-like protein (475 aa).

The HD domain maps to 118 to 272; sequence RLTHTLEVAQ…MDLSDDIAYS (155 aa).

It belongs to the dGTPase family. Type 2 subfamily.

The protein is Deoxyguanosinetriphosphate triphosphohydrolase-like protein (dgt) of Bifidobacterium longum (strain NCC 2705).